A 59-amino-acid polypeptide reads, in one-letter code: Venom protein 37.1 (59 aa).

Residues 1 to 18 (MVSTLMIASVKLRLYCTA) form the signal peptide.

This sequence belongs to the non-disulfide-bridged peptide (NDBP) superfamily. Long chain multifunctional peptide (group 2) family. As to expression, expressed by the venom gland.

Its subcellular location is the secreted. The chain is Venom protein 37.1 from Lychas mucronatus (Chinese swimming scorpion).